We begin with the raw amino-acid sequence, 276 residues long: F-actin-capping protein subunit beta (276 aa).

It belongs to the F-actin-capping protein beta subunit family. Component of the F-actin capping complex, composed of a heterodimer of an alpha and a beta subunit. Subunit of dynactin, a multiprotein complex part of a tripartite complex with dynein and a adapter, such as BICDL1, BICD2 or HOOK3.

Its subcellular location is the cytoplasm. It localises to the cytoskeleton. Functionally, F-actin-capping proteins bind in a Ca(2+)-independent manner to the fast growing ends of actin filaments (barbed end) thereby blocking the exchange of subunits at these ends. Unlike other capping proteins (such as gelsolin and severin), these proteins do not sever actin filaments. Forms, with CAPZB, the barbed end of the fast growing ends of actin filaments in the dynactin complex and stabilizes dynactin structure. The dynactin multiprotein complex activates the molecular motor dynein for ultra-processive transport along microtubules. The polypeptide is F-actin-capping protein subunit beta (cpb) (Drosophila melanogaster (Fruit fly)).